The sequence spans 99 residues: DNA-binding protein HU (99 aa).

It belongs to the bacterial histone-like protein family. As to quaternary structure, homodimer.

Histone-like DNA-binding protein which is capable of wrapping DNA to stabilize it, and thus to prevent its denaturation under extreme environmental conditions. This chain is DNA-binding protein HU (hup), found in Rickettsia typhi (strain ATCC VR-144 / Wilmington).